Consider the following 600-residue polypeptide: Chaperone protein DnaK (600 aa).

Thr175 carries the phosphothreonine; by autocatalysis modification. Positions 569-578 are enriched in low complexity; the sequence is SFAQATAQQA. Positions 569–600 are disordered; sequence SFAQATAQQANTSESDPKADDSNTIDAEIKQD. The span at 583–600 shows a compositional bias: basic and acidic residues; it reads SDPKADDSNTIDAEIKQD.

The protein belongs to the heat shock protein 70 family.

Functionally, acts as a chaperone. This is Chaperone protein DnaK from Mesomycoplasma hyopneumoniae (strain 7448) (Mycoplasma hyopneumoniae).